Reading from the N-terminus, the 353-residue chain is Galectin-9 (353 aa).

A Galectin 1 domain is found at 17 to 147 (FTGPIQGGLQ…CLKLSFITFQ (131 aa)). A beta-D-galactoside-binding positions include Asn47, His60, Arg64, Asn74, and 81-87 (WGPEERK). The tract at residues 167-186 (QFPRTPKGRKQKTQNFRPAH) is disordered. The 129-residue stretch at 225–353 (FYTPIPNGLY…GDIQLTHVQT (129 aa)) folds into the Galectin 2 domain. A beta-D-galactoside is bound by residues His265, Arg269, Thr279, and 285-291 (WGQEERS).

In terms of assembly, homodimer. As to expression, accentuated expression in liver and thymus of embryo, detected in embryonic heart, brain, lung, liver, and kidney. Highly expressed in adult thymus, small intestine, and liver, and to a lesser extent in lung, kidney, spleen, cardiac, and skeletal muscle. Barely detectable in brain and reticulocyte. Expressed in placenta, uterus and decidua during pregnancy. Expressed in CD4+ T-cells with higher levels in iTreg cells than other T-cell types and sustained high levels throughout iTreg cell differentiation (at protein level). Expressed in myeloid cells in lung. Constitutively expressed in microglia. Isoform 1 is expressed exclusively in the small intestine. Isoform 2 expression in decidua increases in pathological pregnancy from gestation day 7.5 to 13.5 and it is higher than in normal pregnancy. Isoform 3 expression in decidua is higher in normal pregnancy than in pathological pregnancy.

It localises to the cytoplasm. It is found in the nucleus. The protein localises to the secreted. Binds galactosides. Has high affinity for the Forssman pentasaccharide. Ligand for HAVCR2/TIM3. Binding to HAVCR2 induces T-helper type 1 lymphocyte (Th1) death. Also stimulates bactericidal activity in infected macrophages by causing macrophage activation and IL1B secretion which restricts intracellular bacterial growth. Ligand for P4HB; the interaction retains P4HB at the cell surface of Th2 T-helper cells, increasing disulfide reductase activity at the plasma membrane, altering the plasma membrane redox state and enhancing cell migration. Ligand for CD44; the interaction enhances binding of SMAD3 to the FOXP3 promoter, leading to up-regulation of FOXP3 expression and increased induced regulatory T (iTreg) cell stability and suppressive function. Promotes ability of mesenchymal stromal cells to suppress T-cell proliferation. Expands regulatory T-cells and induces cytotoxic T-cell apoptosis following virus infection. Activates ERK1/2 phosphorylation inducing cytokine (IL-6, IL-8, IL-12) and chemokine (CCL2) production in mast and dendritic cells. Inhibits degranulation and induces apoptosis of mast cells. Induces maturation and migration of dendritic cells. Inhibits natural killer (NK) cell function. Can transform NK cell phenotype from peripheral to decidual during pregnancy. Astrocyte derived galectin-9 enhances microglial TNF production. May play a role in thymocyte-epithelial interactions relevant to the biology of the thymus. May provide the molecular basis for urate flux across cell membranes, allowing urate that is formed during purine metabolism to efflux from cells and serving as an electrogenic transporter that plays an important role in renal and gastrointestinal urate excretion. Highly selective to the anion urate. Functionally, acts as an eosinophil chemoattractant. It also inhibits angiogenesis. Suppresses IFNG production by natural killer cells. The chain is Galectin-9 (Lgals9) from Mus musculus (Mouse).